We begin with the raw amino-acid sequence, 183 residues long: Protein Dr1 (183 aa).

The region spanning 19–82 is the Histone-fold domain; sequence TLPRASINKI…INAEHVLEAL (64 aa). A repression of TATA-containing promoters region spans residues 92–183; that stretch reads QEAEAVLHDC…DDDDDDDDDY (92 aa). The disordered stretch occupies residues 155 to 183; it reads AMVQRPPLADGSVASKPSEDDDDDDDDDY. The span at 173 to 183 shows a compositional bias: acidic residues; it reads EDDDDDDDDDY.

The protein belongs to the NC2 beta/DR1 family. Component of the Ada2a-containing (ATAC) complex composed of at least Ada2a, Atac1, Hcf, Ada3, Gcn5, Mocs2B, Charac-14, Atac3, Atac2, NC2beta and wds. Homodimer. Interacts with NC2-alpha/Drap1 to form the dNC2 complex.

It localises to the nucleus. Bifunctional basic transcription factor. Activates transcription of DPE (Downstream Promoter Element) containing promoters while repressing transcription of promoters which contain TATA elements. Together with Chrac-14, promotes nucleosome sliding of ATP-dependent nucleosome remodeling complexes. This is Protein Dr1 (NC2beta) from Drosophila melanogaster (Fruit fly).